We begin with the raw amino-acid sequence, 514 residues long: Histidine ammonia-lyase (514 aa).

Positions 143–145 (ASG) form a cross-link, 5-imidazolinone (Ala-Gly). Ser-144 is modified (2,3-didehydroalanine (Ser)).

Belongs to the PAL/histidase family. Post-translationally, contains an active site 4-methylidene-imidazol-5-one (MIO), which is formed autocatalytically by cyclization and dehydration of residues Ala-Ser-Gly.

It localises to the cytoplasm. The enzyme catalyses L-histidine = trans-urocanate + NH4(+). The protein operates within amino-acid degradation; L-histidine degradation into L-glutamate; N-formimidoyl-L-glutamate from L-histidine: step 1/3. This Photorhabdus laumondii subsp. laumondii (strain DSM 15139 / CIP 105565 / TT01) (Photorhabdus luminescens subsp. laumondii) protein is Histidine ammonia-lyase.